Reading from the N-terminus, the 635-residue chain is Probable extracellular metalloproteinase 1 (635 aa).

The N-terminal stretch at 1 to 19 (MHGLLLAAGLLSLPLHVLA) is a signal peptide. A propeptide spanning residues 20–246 (HPQPSTSTSL…VHNVVDYVAH (227 aa)) is cleaved from the precursor. Asn-287 carries an N-linked (GlcNAc...) asparagine glycan. His-430 is a binding site for Zn(2+). The active site involves Glu-431. His-434 contributes to the Zn(2+) binding site. N-linked (GlcNAc...) asparagine glycans are attached at residues Asn-475, Asn-594, and Asn-623.

Belongs to the peptidase M36 family. It depends on Zn(2+) as a cofactor.

The protein localises to the secreted. In terms of biological role, secreted metalloproteinase probably acting as a virulence factor. The polypeptide is Probable extracellular metalloproteinase 1 (MEP1) (Trichophyton verrucosum (strain HKI 0517)).